The following is a 42-amino-acid chain: Cytochrome b559 subunit beta (42 aa).

The helical transmembrane segment at 17–33 (WLAIHAIGIPAVFFIGS) threads the bilayer. His21 is a heme binding site.

Belongs to the PsbE/PsbF family. In terms of assembly, heterodimer of an alpha subunit and a beta subunit. PSII is composed of 1 copy each of membrane proteins PsbA, PsbB, PsbC, PsbD, PsbE, PsbF, PsbH, PsbI, PsbJ, PsbK, PsbL, PsbM, PsbT, PsbX, PsbY, PsbZ, Psb30/Ycf12, at least 3 peripheral proteins of the oxygen-evolving complex and a large number of cofactors. It forms dimeric complexes. Heme b is required as a cofactor.

Its subcellular location is the plastid. The protein localises to the cyanelle thylakoid membrane. Functionally, this b-type cytochrome is tightly associated with the reaction center of photosystem II (PSII). PSII is a light-driven water:plastoquinone oxidoreductase that uses light energy to abstract electrons from H(2)O, generating O(2) and a proton gradient subsequently used for ATP formation. It consists of a core antenna complex that captures photons, and an electron transfer chain that converts photonic excitation into a charge separation. This is Cytochrome b559 subunit beta from Cyanophora paradoxa.